We begin with the raw amino-acid sequence, 2298 residues long: Protein Ycf2 (2298 aa).

An ATP-binding site is contributed by 1640–1647 (GSIGTGRS).

Belongs to the Ycf2 family.

The protein localises to the plastid. Its subcellular location is the chloroplast stroma. Functionally, probable ATPase of unknown function. Its presence in a non-photosynthetic plant (Epifagus virginiana) and experiments in tobacco indicate that it has an essential function which is probably not related to photosynthesis. This is Protein Ycf2 from Carica papaya (Papaya).